The chain runs to 142 residues: 3-hydroxyacyl-[acyl-carrier-protein] dehydratase FabZ (142 aa).

His-47 is a catalytic residue.

Belongs to the thioester dehydratase family. FabZ subfamily.

It is found in the cytoplasm. The catalysed reaction is a (3R)-hydroxyacyl-[ACP] = a (2E)-enoyl-[ACP] + H2O. Functionally, involved in unsaturated fatty acids biosynthesis. Catalyzes the dehydration of short chain beta-hydroxyacyl-ACPs and long chain saturated and unsaturated beta-hydroxyacyl-ACPs. This Coxiella burnetii (strain RSA 331 / Henzerling II) protein is 3-hydroxyacyl-[acyl-carrier-protein] dehydratase FabZ.